A 356-amino-acid chain; its full sequence is Malate dehydrogenase, glyoxysomal (356 aa).

The transit peptide at 1–36 directs the protein to the glyoxysome; it reads MEDAAAAARRMERLASHLRPPASQMEESPLLRGSNC. Residues 51-57 and aspartate 77 contribute to the NAD(+) site; that span reads GASGGIG. Substrate-binding residues include arginine 124 and arginine 130. NAD(+) is bound by residues asparagine 137 and 160-162; that span reads ISN. Asparagine 162 and arginine 196 together coordinate substrate. Residue histidine 220 is the Proton acceptor of the active site. Methionine 271 contacts NAD(+).

Belongs to the LDH/MDH superfamily. MDH type 1 family. As to quaternary structure, homodimer.

It is found in the glyoxysome. The catalysed reaction is (S)-malate + NAD(+) = oxaloacetate + NADH + H(+). The polypeptide is Malate dehydrogenase, glyoxysomal (Oryza sativa subsp. japonica (Rice)).